The following is a 135-amino-acid chain: MLRIYVDAATKGNPGESGGGIVYLTDQSRQQLHVPLGIVSNHEAEFKVLIEALKKAIANEDNQQTVLLHSDSKIVVQTIEKNYAKNEKYQPYLAEYQQLEKNFPLLLIEWLPESQNKAADMLARQALQKFYPNKK.

In terms of domain architecture, RNase H type-1 spans 1–128 (MLRIYVDAAT…ADMLARQALQ (128 aa)). Mg(2+) is bound by residues Asp-7, Glu-45, Asp-71, and Asp-120.

The protein belongs to the RNase H family. EbsB subfamily. Requires Mg(2+) as cofactor.

It localises to the secreted. It is found in the cell wall. Functionally, seems to play some role in the cell surface expression of a chromosomally encoded receptor, named enterococcal binding substance (EBS), that mediates mating aggregate formation. Might interfere with the synthesis or assembly of EBS and function as a cell wall hydrolase. This chain is Putative hydrolase EbsB, found in Enterococcus faecalis (strain ATCC 700802 / V583).